A 512-amino-acid chain; its full sequence is Tyrosine-protein kinase Lyn (512 aa).

The tract at residues 1-45 is disordered; the sequence is MGCIKSKRKDNLNDDEVDSKTQPVRNTDRTIYVRDPTSNKQQRPV. A lipid anchor (N-myristoyl glycine) is attached at Gly-2. Residue Cys-3 is the site of S-palmitoyl cysteine attachment. A Phosphoserine modification is found at Ser-19. The 61-residue stretch at 63 to 123 folds into the SH3 domain; it reads EQGDIVVALY…PSNYVAKVNT (61 aa). The SH2 domain occupies 129-226; it reads WFFKDITRKD…GLCRRLEKAC (98 aa). At Tyr-193 the chain carries Phosphotyrosine. Ser-228 carries the phosphoserine modification. A Protein kinase domain is found at 247 to 501; that stretch reads IKLVKKLGAG…YLQSVLDDFY (255 aa). Residues 253 to 261 and Lys-275 each bind ATP; that span reads LGAGQFGEV. Phosphotyrosine occurs at positions 306 and 316. The active-site Proton acceptor is Asp-367. Position 397 is a phosphotyrosine; by autocatalysis (Tyr-397). 2 positions are modified to phosphotyrosine: Tyr-460 and Tyr-473. Phosphotyrosine; by autocatalysis, CSK and MATK is present on Tyr-508.

The protein belongs to the protein kinase superfamily. Tyr protein kinase family. SRC subfamily. Interacts with TEC. Interacts (via SH2 domain) with FLT3 (tyrosine phosphorylated). Interacts with LIME1 and with CD79A upon activation of the B-cell antigen receptor. Interacts with the B-cell receptor complex. Interacts with phosphorylated THEMIS2. Interacts with EPOR. Interacts with MS4A2/FCER1B. Interaction (via the SH2 and SH3 domains) with MUC1 is stimulated by IL7 and the subsequent phosphorylation increases the binding between MUC1 and CTNNB1/beta-catenin. Interacts with ADAM15. Interacts with NDFIP2 and more weakly with NDFIP1. Interacts with FASLG. Interacts with KIT. Interacts with HCLS1. Interacts with FCGR2B. Interacts with FCGR1A; the interaction may be indirect. Interacts with CD19, CD22, CD79A and CD79B. Interacts (via SH3 domain) with CBLC, PPP1R15A and PDE4A. Interacts with TGFB1I1. Interacts (via SH3 domain) with PIK3R1, the regulatory subunit of phosphatidylinositol 3-kinase; this interaction enhances phosphatidylinositol 3-kinase activity. Interacts with CSF2RB, the common subunit of the IL3, IL5 and CSF2 receptors. Interacts with PAG1; identified in a complex with PAG1 and STAT3. Interacts with ABL1. Interacts with PTPN6/SHP-1. Interacts (via SH3 domain) with SCIMP (via proline-rich region). This interaction facilitates the phosphorylation of SCIMP on 'Tyr-96', which enhances binding of SCIMP to TLR4, and consequently the phosphorylation of TLR4 in response to stimulation by lipopolysaccharide in macrophages. Interacts with LPXN (via LD motif 3) and the interaction is induced upon B-cell antigen receptor (BCR) activation. Interacts (via SH3-domain) with ANKRD54 (via ankyrin repeat region) in an activation-independent status of LYN. Forms a multiprotein complex with ANKRD54 and HCLS1. Interacts (via SH2 and SH3 domains) with UNC119; leading to LYN activation. Interacts with CD36. Interacts with LYN. Interacts with SKAP1 and FYB1; this interaction promotes the phosphorylation of CLNK. Interacts with BCAR1/CAS and NEDD9/HEF1. In terms of processing, ubiquitinated by CBL, leading to its degradation. Autophosphorylated. Phosphorylated on tyrosine residues in response to KIT signaling. Phosphorylation at Tyr-397 is required for optimal activity. Phosphorylation at Tyr-508 inhibits kinase activity. Phosphorylated at Tyr-508 by CSK. Dephosphorylated by PTPRC/CD45. Becomes rapidly phosphorylated upon activation of the B-cell receptor and the immunoglobulin receptor FCGR1A. Phosphorylated in response to ITGB1 in B-cells. Detected in bone marrow-derived monocytes and macrophages (at protein level). Expressed predominantly in B-lymphoid and myeloid cells.

It is found in the cell membrane. It localises to the nucleus. Its subcellular location is the cytoplasm. The protein localises to the perinuclear region. The protein resides in the golgi apparatus. It is found in the membrane. The enzyme catalyses L-tyrosyl-[protein] + ATP = O-phospho-L-tyrosyl-[protein] + ADP + H(+). With respect to regulation, subject to autoinhibition, mediated by intramolecular interactions between the SH2 domain and the C-terminal phosphotyrosine. Phosphorylation at Tyr-397 is required for optimal activity. Phosphorylated by CSK at Tyr-508; phosphorylation at Tyr-508 inhibits kinase activity. Kinase activity is modulated by dephosphorylation by PTPRC/CD45. Inhibited by dasatinib, PP2, and SU6656. Its function is as follows. Non-receptor tyrosine-protein kinase that transmits signals from cell surface receptors and plays an important role in the regulation of innate and adaptive immune responses, hematopoiesis, responses to growth factors and cytokines, integrin signaling, but also responses to DNA damage and genotoxic agents. Functions primarily as negative regulator, but can also function as activator, depending on the context. Required for the initiation of the B-cell response, but also for its down-regulation and termination. Plays an important role in the regulation of B-cell differentiation, proliferation, survival and apoptosis, and is important for immune self-tolerance. Acts downstream of several immune receptors, including the B-cell receptor, CD79A, CD79B, CD5, CD19, CD22, FCER1, FCGR2, FCGR1A, TLR2 and TLR4. Plays a role in the inflammatory response to bacterial lipopolysaccharide. Mediates the responses to cytokines and growth factors in hematopoietic progenitors, platelets, erythrocytes, and in mature myeloid cells, such as dendritic cells, neutrophils and eosinophils. Acts downstream of EPOR, KIT, MPL, the chemokine receptor CXCR4, as well as the receptors for IL3, IL5 and CSF2. Plays an important role in integrin signaling. Regulates cell proliferation, survival, differentiation, migration, adhesion, degranulation, and cytokine release. Involved in the regulation of endothelial activation, neutrophil adhesion and transendothelial migration. Down-regulates signaling pathways by phosphorylation of immunoreceptor tyrosine-based inhibitory motifs (ITIM), that then serve as binding sites for phosphatases, such as PTPN6/SHP-1, PTPN11/SHP-2 and INPP5D/SHIP-1, that modulate signaling by dephosphorylation of kinases and their substrates. Phosphorylates LIME1 in response to CD22 activation. Phosphorylates BTK, CBL, CD5, CD19, CD72, CD79A, CD79B, CSF2RB, DOK1, HCLS1, MS4A2/FCER1B, SYK and TEC. Phosphorylates PIRB at Tyr-794 and Tyr-824, which is required for PIRB interaction with PTPN6/SHP-1 and PTPN11/SHP-2. Promotes phosphorylation of SIRPA, PTPN6/SHP-1, PTPN11/SHP-2 and INPP5D/SHIP-1. Required for rapid phosphorylation of FER in response to FCER1 activation. Mediates KIT phosphorylation. Acts as an effector of EPOR (erythropoietin receptor) in controlling KIT expression and may play a role in erythroid differentiation during the switch between proliferation and maturation. Depending on the context, activates or inhibits several signaling cascades. Regulates phosphatidylinositol 3-kinase activity and AKT1 activation. Regulates activation of the MAP kinase signaling cascade, including activation of MAP2K1/MEK1, MAPK1/ERK2, MAPK3/ERK1, MAPK8/JNK1 and MAPK9/JNK2. Mediates activation of STAT5A and/or STAT5B. Phosphorylates LPXN on 'Tyr-72'. Kinase activity facilitates TLR4-TLR6 heterodimerization and signal initiation. Phosphorylates SCIMP on 'Tyr-96'; this enhances binding of SCIMP to TLR4, promoting the phosphorylation of TLR4, and a selective cytokine response to lipopolysaccharide in macrophages. Phosphorylates CLNK. Phosphorylates BCAR1/CAS and NEDD9/HEF1. In Mus musculus (Mouse), this protein is Tyrosine-protein kinase Lyn (Lyn).